The primary structure comprises 681 residues: Cell cycle checkpoint protein RAD17 (681 aa).

The short motif at 17–25 is the RAD1-binding motif element; that stretch reads DWVDPSFDD. Positions 42–61 are disordered; sequence VNNSSHRRKNGPSTLESSRF. Thr55 carries the phosphothreonine modification. 2 positions are modified to phosphoserine: Ser71 and Ser86. Residue 137–144 participates in ATP binding; the sequence is GPPGCGKT. 2 disordered regions span residues 344-377 and 606-681; these read SSKG…KPDR and HGMI…SDGT. Position 359 is a phosphoserine (Ser359). An interaction with MCM7 region spans residues 432–681; that stretch reads LVEPEEVVEM…IIEDYESDGT (250 aa). The span at 631–662 shows a compositional bias: polar residues; that stretch reads EPTQATVPETWSLPLSQNSASELPASQPQPFS. Thr633 carries the phosphothreonine; by ATM modification. Residues Ser646 and Ser656 each carry the phosphoserine; by ATR and ATM modification. Acidic residues predominate over residues 666 to 681; the sequence is DMEENIIIEDYESDGT.

This sequence belongs to the rad17/RAD24 family. Part of a DNA-binding complex containing RFC2, RFC3, RFC4 and RFC5. Interacts with RAD1 and RAD9 within the 9-1-1 (RAD1-RAD9-HUS1) complex. Interacts with RAD9B, POLE, SNU13 and MCM7. DNA damage promotes interaction with ATR or ATM and disrupts interaction with the 9-1-1 (RAD1-RAD9-HUS1) complex. Interacts (when phosphorylated) with NBN; promoting recruitment of the MRN complex to DNA damage sites. Post-translationally, phosphorylation on Ser-646 and Ser-656 is cell cycle-regulated, enhanced by genotoxic stress, and required for activation of checkpoint signaling. Phosphorylation is mediated by ATR upon UV or replication arrest, whereas it may be mediated both by ATR and ATM upon ionizing radiation. Phosphorylation on both sites is required for interaction with RAD1 but dispensable for interaction with RFC3 or RFC4. Phosphorylation at Thr-633 by ATM in response to DNA damage promotes interaction with NBN and recruitment of the MRN complex to DNA damage sites. In terms of tissue distribution, overexpressed in various cancer cell lines and in colon carcinoma (at protein level). Isoform 2 and isoform 3 are the most abundant isoforms in non irradiated cells (at protein level). Ubiquitous at low levels. Highly expressed in testis, where it is expressed within the germinal epithelium of the seminiferous tubuli. Weakly expressed in seminomas (testicular tumors).

The protein resides in the nucleus. The protein localises to the chromosome. Essential for sustained cell growth, maintenance of chromosomal stability, and ATR-dependent checkpoint activation upon DNA damage. Has a weak ATPase activity required for binding to chromatin. Participates in the recruitment of the 9-1-1 (RAD1-RAD9-HUS1) complex and RHNO1 onto chromatin, and in CHEK1 activation. Involved in homologous recombination by mediating recruitment of the MRN complex to DNA damage sites. May also serve as a sensor of DNA replication progression. The sequence is that of Cell cycle checkpoint protein RAD17 from Homo sapiens (Human).